The chain runs to 477 residues: Proline--tRNA ligase (477 aa).

This sequence belongs to the class-II aminoacyl-tRNA synthetase family. ProS type 3 subfamily. Homodimer.

It localises to the cytoplasm. It catalyses the reaction tRNA(Pro) + L-proline + ATP = L-prolyl-tRNA(Pro) + AMP + diphosphate. Catalyzes the attachment of proline to tRNA(Pro) in a two-step reaction: proline is first activated by ATP to form Pro-AMP and then transferred to the acceptor end of tRNA(Pro). The polypeptide is Proline--tRNA ligase (Methanocorpusculum labreanum (strain ATCC 43576 / DSM 4855 / Z)).